Reading from the N-terminus, the 344-residue chain is Uroporphyrinogen decarboxylase (344 aa).

Residues 23 to 27 (RQAGR), Asp73, Tyr149, Thr204, and His321 each bind substrate.

It belongs to the uroporphyrinogen decarboxylase family. As to quaternary structure, homodimer.

It is found in the cytoplasm. The catalysed reaction is uroporphyrinogen III + 4 H(+) = coproporphyrinogen III + 4 CO2. It functions in the pathway porphyrin-containing compound metabolism; protoporphyrin-IX biosynthesis; coproporphyrinogen-III from 5-aminolevulinate: step 4/4. Catalyzes the decarboxylation of four acetate groups of uroporphyrinogen-III to yield coproporphyrinogen-III. This Francisella tularensis subsp. mediasiatica (strain FSC147) protein is Uroporphyrinogen decarboxylase.